Consider the following 654-residue polypeptide: MLDRVGPGFQDLCRQVLPTLPTLSQEEVSTIWANVSDFVERQLTMHKGVQISGLGTFTFSRQQLEVGNKKFVLVQRPVFIMAEKLVQTHGLKQNKVFSPGDIPVVPLNFVMISLEGPFNRDTIEGCVKETLLFLSRSISVKQKVEFTFKGIGVLSIRDSKVKMRFYKDFLCSMDGSGILTKALANRPGTMDSVLSSRESYRKRPNSAMAFPRIEHKETENKTPVEVVGEEGGENRPRKIKLKDQSDKEGGAREISSPKKHRERQSISPAKVTSVSLLDKFERSGNGGKITACENLSSPGCQRNDNERPRTSPAPACQDHNKAGQEMCYVCLQRAQRNFALHYGDERRRREIEDERLMQQYQILKDQEAFFKNQVKGMAAREQNQKNAAYNLGVAEAIRNHKNEKPEFYKSFLFDKRPLSPEINAFKQEEYSQSLLKQMESKREKEIKQRQNRELMDRLEQVQLTEELAAQRAQYLKEKMEETQHYKRALDAQVKNKPPQLPMFEPDSAEPIFGKNDGEREMEKRKREQSCMKHQMEAAASHKRNTILNQLVDQRRDLQMLQRTQREHMADRAAEMDRVNRLNQCLQEDWDRSLAMKKQRDVEEKAFERASDKLFLLDQCEKYRRCRQCQRRTCNTGESNLWPMNKFLQGSRLLV.

The tract at residues 196 to 270 (SRESYRKRPN…RERQSISPAK (75 aa)) is disordered. Ser-206 carries the post-translational modification Phosphoserine. 2 stretches are compositionally biased toward basic and acidic residues: residues 212-222 (RIEHKETENKT) and 232-251 (GENR…EGGA). Phosphoserine occurs at positions 273, 275, 296, and 419. The segment covering 293-302 (ENLSSPGCQR) has biased composition (polar residues). The interval 293-318 (ENLSSPGCQRNDNERPRTSPAPACQD) is disordered. Residues 431-562 (SQSLLKQMES…QRRDLQMLQR (132 aa)) adopt a coiled-coil conformation.

The protein resides in the cytoplasm. The protein localises to the cytoskeleton. Its subcellular location is the microtubule organizing center. It is found in the centrosome. This is Coiled-coil domain-containing protein 81 (Ccdc81) from Mus musculus (Mouse).